A 179-amino-acid chain; its full sequence is MAVLQKSMSFSLMGTLAASCLLLIALWAQEANALPINTRCKLEVSNFQQPYIVNRTFMLAKEVSLADNNTDVWLIGEKLFRGVSAKDQCYLMKQVLNFTLEDVLLPQSDRFQPYMQEVVPFLTKLSNQLSSCHISGDDQNIQKNVRRLKETVKKLGESGEIKAIGELDLLFMSLRNACV.

A signal peptide spans methionine 1 to alanine 33. Disulfide bonds link cysteine 40–cysteine 132 and cysteine 89–cysteine 178. Asparagine 54, asparagine 68, and asparagine 97 each carry an N-linked (GlcNAc...) asparagine glycan.

The protein belongs to the IL-10 family.

It localises to the secreted. Cytokine that contributes to the inflammatory response in vivo. This Mus musculus (Mouse) protein is Interleukin-22b.